A 94-amino-acid chain; its full sequence is Transcription factor PRE6 (94 aa).

Residues Met-1–Asp-20 are disordered. Residues Ser-6 to Leu-60 enclose the bHLH domain.

It belongs to the bHLH protein family. Interacts with HFR1.

The protein resides in the cytoplasm. The protein localises to the nucleus. Its function is as follows. Atypical and probable non DNA-binding bHLH transcription factor that regulates light-mediated responses in day light conditions by binding and inhibiting the activity of the bHLH transcription factor HFR1, a critical regulator of light signaling and shade avoidance. Forms non-functional heterodimers with HFR1, causing liberation and activation of PIF4 from the transcriptionally inactive HFR1-PIF4 complex. The protein is Transcription factor PRE6 (PRE6) of Arabidopsis thaliana (Mouse-ear cress).